The primary structure comprises 416 residues: UDP-N-acetylglucosamine 1-carboxyvinyltransferase (416 aa).

Phosphoenolpyruvate is bound at residue 22-23; it reads KN. Arg91 is a binding site for UDP-N-acetyl-alpha-D-glucosamine. Residue Cys115 is the Proton donor of the active site. At Cys115 the chain carries 2-(S-cysteinyl)pyruvic acid O-phosphothioketal. UDP-N-acetyl-alpha-D-glucosamine is bound by residues 120-124, Asp305, and Ile327; that span reads RPIDL.

Belongs to the EPSP synthase family. MurA subfamily.

Its subcellular location is the cytoplasm. It carries out the reaction phosphoenolpyruvate + UDP-N-acetyl-alpha-D-glucosamine = UDP-N-acetyl-3-O-(1-carboxyvinyl)-alpha-D-glucosamine + phosphate. It functions in the pathway cell wall biogenesis; peptidoglycan biosynthesis. Functionally, cell wall formation. Adds enolpyruvyl to UDP-N-acetylglucosamine. The protein is UDP-N-acetylglucosamine 1-carboxyvinyltransferase of Buchnera aphidicola subsp. Acyrthosiphon pisum (strain 5A).